Here is a 670-residue protein sequence, read N- to C-terminus: Protein angel homolog 1 (670 aa).

2 positions are modified to phosphoserine: Ser77 and Ser105.

This sequence belongs to the CCR4/nocturin family.

In Homo sapiens (Human), this protein is Protein angel homolog 1 (ANGEL1).